The following is a 549-amino-acid chain: CTP synthase (549 aa).

Residues 1–267 (MAKFVFITGG…CREVLDVLQL (267 aa)) are amidoligase domain. A CTP-binding site is contributed by serine 13. Serine 13 serves as a coordination point for UTP. ATP contacts are provided by residues 14–19 (SIGKGI) and aspartate 71. 2 residues coordinate Mg(2+): aspartate 71 and glutamate 141. Residues 148–150 (DIE), 188–193 (KTKPTQ), and lysine 224 each bind CTP. Residues 188 to 193 (KTKPTQ) and lysine 224 contribute to the UTP site. Positions 292–534 (KVALVGKYVQ…IEAAQQRLPD (243 aa)) constitute a Glutamine amidotransferase type-1 domain. Glycine 354 contacts L-glutamine. Cysteine 381 functions as the Nucleophile; for glutamine hydrolysis in the catalytic mechanism. L-glutamine is bound by residues 382–385 (LGMQ), glutamate 405, and arginine 462. Residues histidine 507 and glutamate 509 contribute to the active site.

It belongs to the CTP synthase family. As to quaternary structure, homotetramer.

The catalysed reaction is UTP + L-glutamine + ATP + H2O = CTP + L-glutamate + ADP + phosphate + 2 H(+). It catalyses the reaction L-glutamine + H2O = L-glutamate + NH4(+). The enzyme catalyses UTP + NH4(+) + ATP = CTP + ADP + phosphate + 2 H(+). The protein operates within pyrimidine metabolism; CTP biosynthesis via de novo pathway; CTP from UDP: step 2/2. Allosterically activated by GTP, when glutamine is the substrate; GTP has no effect on the reaction when ammonia is the substrate. The allosteric effector GTP functions by stabilizing the protein conformation that binds the tetrahedral intermediate(s) formed during glutamine hydrolysis. Inhibited by the product CTP, via allosteric rather than competitive inhibition. Catalyzes the ATP-dependent amination of UTP to CTP with either L-glutamine or ammonia as the source of nitrogen. Regulates intracellular CTP levels through interactions with the four ribonucleotide triphosphates. This Synechococcus sp. (strain CC9902) protein is CTP synthase.